We begin with the raw amino-acid sequence, 591 residues long: L-fucose isomerase (591 aa).

Active-site proton acceptor residues include E337 and D361. The Mn(2+) site is built by E337, D361, and H528.

This sequence belongs to the L-fucose isomerase family. In terms of assembly, homohexamer. Mn(2+) is required as a cofactor.

It is found in the cytoplasm. It catalyses the reaction L-fucose = L-fuculose. It participates in carbohydrate degradation; L-fucose degradation; L-lactaldehyde and glycerone phosphate from L-fucose: step 1/3. In terms of biological role, converts the aldose L-fucose into the corresponding ketose L-fuculose. The chain is L-fucose isomerase from Salmonella schwarzengrund (strain CVM19633).